The chain runs to 2141 residues: Oxygen-regulated protein 1 (2141 aa).

Residues 1–10 show a composition bias toward polar residues; it reads MSETSSTSVS. Positions 1–20 are disordered; the sequence is MSETSSTSVSMIHRSFEGQG. The Doublecortin 1 domain occupies 34–116; the sequence is KKISFYKSGD…RRKVQPVDLD (83 aa). The interval 126 to 149 is disordered; the sequence is LSSRAISAHAQRSPPTSIGAAGAP. A Doublecortin 2 domain is found at 156–235; that stretch reads RRLLVFRNGD…REPFKPGNYD (80 aa). Disordered regions lie at residues 259–278, 1432–1458, and 1589–1612; these read RSES…SQIY, YTSS…SSER, and DWSE…GPNG. The span at 268-278 shows a compositional bias: polar residues; sequence HVPSSPRSQIY. Residues 1435–1444 are compositionally biased toward basic and acidic residues; the sequence is SDKEDSKTSE. Composition is skewed to polar residues over residues 1448-1458 and 1598-1610; these read SITNSMTSSER and ENEQ…SDGP.

In terms of assembly, interacts (via the doublecortin domains) with microtubules. Interacts with RP1L1. Interacts with MAK.

It is found in the cytoplasm. The protein localises to the cytoskeleton. Its subcellular location is the cilium axoneme. It localises to the cell projection. The protein resides in the cilium. It is found in the photoreceptor outer segment. Microtubule-associated protein regulating the stability and length of the microtubule-based axoneme of photoreceptors. Required for the differentiation of photoreceptor cells, it plays a role in the organization of the outer segment of rod and cone photoreceptors ensuring the correct orientation and higher-order stacking of outer segment disks along the photoreceptor axoneme. The protein is Oxygen-regulated protein 1 (RP1) of Canis lupus familiaris (Dog).